The following is a 592-amino-acid chain: MPDTILVAVAWPYANGPFHVGHIAGAYLPADVFARYHRLRGHRTLMVSGSDCHGTPITIAAEREGITPQDVIRRYHPTFLKTFQALGISFDLFTQTYTDNHYRVTTDMFLRLLENGYLYKETMVGSYSETLGRFLPDRFVEGTCPNCGYPRARGDQCDSCGHLHDPQDLIAPRSVLDGAPVTFRETEHFFLDLAKLEPQLRAWIESVDRSYWRANTLLFTQNWLREGLRGRAITRDLEWGVPVPVDDPAFKDKRIYVWFDAVIGYYSASVEWAERTGAPDAWKDWWVCLPDGSAPARSYYFIGKDNIPFHTIIWPAMLIGYGNLALPYDVPANEFLNLEGDKMSTSRNWALWAPEIEDRYQPDAIRYYLIANGPETRDSNWSWADFVQRVNSELVATWGNLANRVLSITHRNFGAVPQPGELTDADRQLIAATQQTFESVTALLDGVKLRAALSEAMALAQTANQYLSEQEPWKLVRHDQERAATVLFVALRTVDTLKVLFCPFLPFSSQRLHELLGYTGTIAPQPHVEETTAPDGLPRLVLTGDYRASAGAWRISVLPPGQPIQPPTPLFQKLDEAIIAEELARLRAKVRL.

Positions 12–22 (PYANGPFHVGH) match the 'HIGH' region motif. Zn(2+)-binding residues include Cys144, Cys147, Cys157, and Cys160. The 'KMSKS' region signature appears at 342-346 (KMSTS). Thr345 contacts ATP.

The protein belongs to the class-I aminoacyl-tRNA synthetase family. MetG type 1 subfamily. Monomer. Zn(2+) is required as a cofactor.

It is found in the cytoplasm. The catalysed reaction is tRNA(Met) + L-methionine + ATP = L-methionyl-tRNA(Met) + AMP + diphosphate. Functionally, is required not only for elongation of protein synthesis but also for the initiation of all mRNA translation through initiator tRNA(fMet) aminoacylation. This Roseiflexus castenholzii (strain DSM 13941 / HLO8) protein is Methionine--tRNA ligase.